The primary structure comprises 373 residues: Nuclear hormone receptor family member nhr-69 (373 aa).

The segment at residues E3 to N78 is a DNA-binding region (nuclear receptor). 2 consecutive NR C4-type zinc fingers follow at residues C6–C26 and C42–C66. The NR LBD domain occupies E93–D344.

This sequence belongs to the nuclear hormone receptor family. As to quaternary structure, interacts with R-SMAD daf-8. As to expression, expressed in the ASI neurons, hypodermis, and in tail neurons.

The protein localises to the nucleus. Orphan nuclear receptor which, in cooperation with R-SMAD daf-8, modulates the Insulin/IGF-1-like signaling (IIS) pathway, perhaps by regulating expression of the potassium channel exp-2, which in turn modulates the secretion of insulin-like peptide daf-28. The chain is Nuclear hormone receptor family member nhr-69 (nhr-69) from Caenorhabditis elegans.